Reading from the N-terminus, the 410-residue chain is Peptidase T (410 aa).

Position 79 (His79) interacts with Zn(2+). Asp81 is an active-site residue. Asp142 provides a ligand contact to Zn(2+). Residue Glu176 is the Proton acceptor of the active site. Zn(2+) is bound by residues Glu177, Asp199, and His381.

It belongs to the peptidase M20B family. Requires Zn(2+) as cofactor.

It localises to the cytoplasm. The catalysed reaction is Release of the N-terminal residue from a tripeptide.. Cleaves the N-terminal amino acid of tripeptides. The sequence is that of Peptidase T from Geobacillus sp. (strain WCH70).